A 66-amino-acid polypeptide reads, in one-letter code: Beta-mammal toxin Css2 (66 aa).

The 66-residue stretch at 1-66 folds into the LCN-type CS-alpha/beta domain; it reads KEGYLVSKST…VWPLPNKTCN (66 aa). 4 disulfides stabilise this stretch: cysteine 12/cysteine 65, cysteine 16/cysteine 41, cysteine 25/cysteine 46, and cysteine 29/cysteine 48. An Asparagine amide modification is found at asparagine 66.

The protein belongs to the long (4 C-C) scorpion toxin superfamily. Sodium channel inhibitor family. Beta subfamily. In terms of processing, C-terminal amidation increases its affinity for sodium channels. In terms of tissue distribution, expressed by the venom gland.

Its subcellular location is the secreted. Beta toxin that binds site-4 of sodium channels (Nav) and reduces peak current (observed on Nav1.6/SCN8A (IC(50)=307 nM)), shifts the voltage of activation toward more negative potentials (observed on Nav1.6, Nav1.1 (weak), Nav1.2 (weak), and Nav1.7 (weak)), and induces resurgent currents at negative voltages following brief and strong depolarizations (observed on Nav1.6, Nav1.1 (weak), and Nav1.7 (weak)). A reduction of peak current of Nav1.5/SCN7A has been observed in another study (IC(50)=35-40 nM). This toxin is only active on mammals. It has been shown to bind phospholipids. The chain is Beta-mammal toxin Css2 from Centruroides suffusus (Durango bark scorpion).